Consider the following 116-residue polypeptide: Ribosome-binding factor A (116 aa).

The protein belongs to the RbfA family. As to quaternary structure, monomer. Binds 30S ribosomal subunits, but not 50S ribosomal subunits or 70S ribosomes.

It localises to the cytoplasm. Functionally, one of several proteins that assist in the late maturation steps of the functional core of the 30S ribosomal subunit. Associates with free 30S ribosomal subunits (but not with 30S subunits that are part of 70S ribosomes or polysomes). Required for efficient processing of 16S rRNA. May interact with the 5'-terminal helix region of 16S rRNA. This chain is Ribosome-binding factor A, found in Levilactobacillus brevis (strain ATCC 367 / BCRC 12310 / CIP 105137 / JCM 1170 / LMG 11437 / NCIMB 947 / NCTC 947) (Lactobacillus brevis).